We begin with the raw amino-acid sequence, 224 residues long: Polyadenylate-binding protein 2 (224 aa).

Over residues 1–36 (MADEDITLNEDQLLESLEETNGEQETEIATEVEEEG) the composition is skewed to acidic residues. The tract at residues 1-40 (MADEDITLNEDQLLESLEETNGEQETEIATEVEEEGSMQI) is disordered. A coiled-coil region spans residues 9–74 (NEDQLLESLE…QSEVDKQMAG (66 aa)). Positions 96 to 173 (RSVYVGNVDY…RQIKVMSKRT (78 aa)) constitute an RRM domain.

As to quaternary structure, interacts with ZC3H3. As to expression, expressed ubiquitously in all transcriptionally active cells.

It localises to the nucleus. The protein resides in the cytoplasm. Involved in the 3'-end formation of mRNA precursors (pre-mRNA) by the addition of a poly(A) tail of 200-250 nt to the upstream cleavage product. Stimulates poly(A) polymerase (PAPOLA) conferring processivity on the poly(A) tail elongation reaction and also controls the poly(A) tail length. Increases the affinity of poly(A) polymerase for RNA. Binds to poly(A) and to poly(G) with high affinity. May protect the poly(A) tail from degradation. Plays a role in the positive regulation of alpha-1,3 fucosylation, possibly by cooperating with swm which regulates nuclear export of fucosyltransferase FucTA. Involved in germline stem cell transit amplification, differentiation and mitosis-to-meiosis transition. This is Polyadenylate-binding protein 2 from Drosophila melanogaster (Fruit fly).